We begin with the raw amino-acid sequence, 127 residues long: Ribonuclease P protein component (127 aa).

The protein belongs to the RnpA family. In terms of assembly, consists of a catalytic RNA component (M1 or rnpB) and a protein subunit.

It carries out the reaction Endonucleolytic cleavage of RNA, removing 5'-extranucleotides from tRNA precursor.. Its function is as follows. RNaseP catalyzes the removal of the 5'-leader sequence from pre-tRNA to produce the mature 5'-terminus. It can also cleave other RNA substrates such as 4.5S RNA. The protein component plays an auxiliary but essential role in vivo by binding to the 5'-leader sequence and broadening the substrate specificity of the ribozyme. The protein is Ribonuclease P protein component of Synechococcus sp. (strain RCC307).